The chain runs to 161 residues: MTRGPIFLNVGISYGLPRTKLPAAVSFRKWVAATLQGRIRKADLAIRIVDEKEGRALNYHYRNKDYATNVLSFPAQLPEPFPKALKIPLLGDIVMCAPVIAREATEQGKSLSAHYAHLTVHGTLHLLGWNHEDHQEADAMEQLEREILANLGISDPYLGEY.

Histidine 121, histidine 125, and histidine 131 together coordinate Zn(2+).

This sequence belongs to the endoribonuclease YbeY family. It depends on Zn(2+) as a cofactor.

The protein localises to the cytoplasm. In terms of biological role, single strand-specific metallo-endoribonuclease involved in late-stage 70S ribosome quality control and in maturation of the 3' terminus of the 16S rRNA. In Xylella fastidiosa (strain M23), this protein is Endoribonuclease YbeY.